We begin with the raw amino-acid sequence, 360 residues long: Peptide chain release factor 1 (360 aa).

Q235 is modified (N5-methylglutamine). Residues D280 to T293 show a composition bias toward basic and acidic residues. The segment at D280 to S300 is disordered.

This sequence belongs to the prokaryotic/mitochondrial release factor family. Methylated by PrmC. Methylation increases the termination efficiency of RF1.

It localises to the cytoplasm. Peptide chain release factor 1 directs the termination of translation in response to the peptide chain termination codons UAG and UAA. The chain is Peptide chain release factor 1 from Paraburkholderia xenovorans (strain LB400).